Here is a 660-residue protein sequence, read N- to C-terminus: Interferon-induced GTP-binding protein Mx1 (660 aa).

Met-1 bears the N-acetylmethionine mark. Residues 1–10 (MVHSEAKMTR) show a composition bias toward basic and acidic residues. Residues 1–29 (MVHSEAKMTRPDSASASKQQLLNGNADIQ) are disordered. Residues 12-29 (DSASASKQQLLNGNADIQ) are compositionally biased toward polar residues. One can recognise a Dynamin-type G domain in the interval 67–340 (DLALPAIAVI…LITHISKSLP (274 aa)). The G1 motif stretch occupies residues 77 to 84 (GDQSSGKS). 77-84 (GDQSSGKS) is a GTP binding site. Positions 102 to 104 (VTR) are G2 motif. A G3 motif region spans residues 178-181 (DLPG). GTP contacts are provided by residues 178–182 (DLPGI) and 247–250 (TKPD). The G4 motif stretch occupies residues 247–250 (TKPD). The G5 motif stretch occupies residues 279–282 (KCRG). A bundle signaling element (BSE) region spans residues 341–366 (LLENQIKESYQNLSDELQKYGTDIPE). The tract at residues 366 to 533 (EDETEKTFFL…HFQMEKIVYC (168 aa)) is middle domain. The segment at 367 to 630 (DETEKTFFLI…RDTYDWLLKE (264 aa)) is stalk. The interval 554–557 (KKKK) is critical for lipid-binding. Residues 572-660 (MAEILEHLNA…ARRRLAKFPG (89 aa)) form the GED domain.

It belongs to the TRAFAC class dynamin-like GTPase superfamily. Dynamin/Fzo/YdjA family. Homooligomer. Oligomerizes into multimeric filamentous or ring-like structures by virtue of its stalk domain. Oligomerization is critical for GTPase activity, protein stability, and recognition of viral target structures. Interacts with TRPC1, TRPC3, TRPC4, TRPC5, TRPC6 and TRPC7. Interacts with HSPA5. Interacts with TUBB/TUBB5. Interacts with DDX39A and DDX39B. ISGylated.

It localises to the cytoplasm. Its subcellular location is the endoplasmic reticulum membrane. The protein resides in the perinuclear region. Its function is as follows. Interferon-induced dynamin-like GTPase with antiviral activity. The polypeptide is Interferon-induced GTP-binding protein Mx1 (MX1) (Equus caballus (Horse)).